The sequence spans 372 residues: Spermidine/putrescine import ATP-binding protein PotA (372 aa).

Positions 11 to 241 constitute an ABC transporter domain; that stretch reads IELRSITKSY…PANLFVARFI (231 aa). 43–50 contributes to the ATP binding site; sequence GPSGCGKT.

Belongs to the ABC transporter superfamily. Spermidine/putrescine importer (TC 3.A.1.11.1) family. In terms of assembly, the complex is composed of two ATP-binding proteins (PotA), two transmembrane proteins (PotB and PotC) and a solute-binding protein (PotD).

It is found in the cell inner membrane. It carries out the reaction ATP + H2O + polyamine-[polyamine-binding protein]Side 1 = ADP + phosphate + polyamineSide 2 + [polyamine-binding protein]Side 1.. Part of the ABC transporter complex PotABCD involved in spermidine/putrescine import. Responsible for energy coupling to the transport system. The chain is Spermidine/putrescine import ATP-binding protein PotA from Aggregatibacter actinomycetemcomitans (Actinobacillus actinomycetemcomitans).